Consider the following 537-residue polypeptide: Biotin carboxylase, chloroplastic (537 aa).

A chloroplast-targeting transit peptide spans 1–71; that stretch reads MDASMITNSK…ATSGGLGVTC (71 aa). ATP-binding positions include Lys-188, Lys-230, 236–237, 272–275, and His-280; these read GG and EKFV. The region spanning 192–389 is the ATP-grasp domain; it reads RETMKNAGVP…LIEEQIRVAM (198 aa). Lys-309 is a hydrogencarbonate binding site. Positions 347 and 360 each coordinate ATP. 3 residues coordinate Mg(2+): Glu-347, Glu-360, and Asn-362. Mn(2+) contacts are provided by Glu-347, Glu-360, and Asn-362. The hydrogencarbonate site is built by Arg-364, Val-367, and Arg-410. The active site involves Arg-364. Arg-410 provides a ligand contact to biotin.

Acetyl-CoA carboxylase is a heterohexamer composed of biotin carboxyl carrier protein, biotin carboxylase and two subunits each of ACCase subunit alpha and ACCase plastid-coded subunit beta (accD). Requires Mg(2+) as cofactor. The cofactor is Mn(2+). Accumulates in fatty acids synthesizing tissues. Mostly expressed in siliques, developing leaves, and flowers, present in roots and embryos (especially at torpedo stage), and, to a lower extent, in mature leaves.

The protein localises to the plastid. It localises to the chloroplast. It carries out the reaction N(6)-biotinyl-L-lysyl-[protein] + hydrogencarbonate + ATP = N(6)-carboxybiotinyl-L-lysyl-[protein] + ADP + phosphate + H(+). It participates in lipid metabolism; malonyl-CoA biosynthesis; malonyl-CoA from acetyl-CoA: step 1/1. In terms of biological role, this protein is a component of the acetyl coenzyme A carboxylase complex; first, biotin carboxylase catalyzes the carboxylation of the carrier protein and then the transcarboxylase transfers the carboxyl group to form malonyl-CoA. This chain is Biotin carboxylase, chloroplastic (CAC2), found in Arabidopsis thaliana (Mouse-ear cress).